A 127-amino-acid chain; its full sequence is Protein translocase subunit SecE (127 aa).

3 helical membrane passes run 17 to 37 (VKWISISIFFILSFFINMCFY), 41 to 61 (LFIRIFIISCLMLCAIGTMIY), and 95 to 115 (FIVISVTIFISFILWSIDSVI).

The protein belongs to the SecE/SEC61-gamma family. In terms of assembly, component of the Sec protein translocase complex. Heterotrimer consisting of SecY, SecE and SecG subunits. The heterotrimers can form oligomers, although 1 heterotrimer is thought to be able to translocate proteins. Interacts with the ribosome. Interacts with SecDF, and other proteins may be involved. Interacts with SecA.

The protein localises to the cell inner membrane. Essential subunit of the Sec protein translocation channel SecYEG. Clamps together the 2 halves of SecY. May contact the channel plug during translocation. This Buchnera aphidicola subsp. Acyrthosiphon pisum (strain APS) (Acyrthosiphon pisum symbiotic bacterium) protein is Protein translocase subunit SecE.